A 245-amino-acid chain; its full sequence is Probable transcriptional regulatory protein Aflv_0709 (245 aa).

The segment covering 1-14 (MAGHSKWKNIQRRK) has biased composition (basic residues). Positions 1 to 21 (MAGHSKWKNIQRRKNAQDAKR) are disordered.

The protein belongs to the TACO1 family.

It is found in the cytoplasm. The chain is Probable transcriptional regulatory protein Aflv_0709 from Anoxybacillus flavithermus (strain DSM 21510 / WK1).